The sequence spans 383 residues: Large ribosomal subunit protein uL2m (383 aa).

Disordered stretches follow at residues 97–122 and 322–357; these read FPKK…GGGH and MNAN…YKTR. Composition is skewed to basic residues over residues 106–122 and 330–340; these read GRNH…GGGH and GGGRGKSKGNR.

Belongs to the universal ribosomal protein uL2 family. Component of the mitochondrial large ribosomal subunit (mt-LSU). Mature N.crassa 74S mitochondrial ribosomes consist of a small (37S) and a large (54S) subunit. The 37S small subunit contains a 16S ribosomal RNA (16S mt-rRNA) and 32 different proteins. The 54S large subunit contains a 23S rRNA (23S mt-rRNA) and 42 different proteins.

It is found in the mitochondrion. Its function is as follows. Component of the mitochondrial ribosome (mitoribosome), a dedicated translation machinery responsible for the synthesis of mitochondrial genome-encoded proteins, including at least some of the essential transmembrane subunits of the mitochondrial respiratory chain. The mitoribosomes are attached to the mitochondrial inner membrane and translation products are cotranslationally integrated into the membrane. This chain is Large ribosomal subunit protein uL2m (rml2), found in Neurospora crassa (strain ATCC 24698 / 74-OR23-1A / CBS 708.71 / DSM 1257 / FGSC 987).